The chain runs to 224 residues: Large ribosomal subunit protein uL3 (224 aa).

Q158 carries the N5-methylglutamine modification.

The protein belongs to the universal ribosomal protein uL3 family. Part of the 50S ribosomal subunit. Forms a cluster with proteins L14 and L19. Methylated by PrmB.

One of the primary rRNA binding proteins, it binds directly near the 3'-end of the 23S rRNA, where it nucleates assembly of the 50S subunit. In Acidovorax sp. (strain JS42), this protein is Large ribosomal subunit protein uL3.